The chain runs to 160 residues: Ribosomal RNA large subunit methyltransferase H (160 aa).

S-adenosyl-L-methionine-binding positions include Leu77, Gly109, and 128 to 133; that span reads FSRLTF.

It belongs to the RNA methyltransferase RlmH family. As to quaternary structure, homodimer.

The protein localises to the cytoplasm. The catalysed reaction is pseudouridine(1915) in 23S rRNA + S-adenosyl-L-methionine = N(3)-methylpseudouridine(1915) in 23S rRNA + S-adenosyl-L-homocysteine + H(+). In terms of biological role, specifically methylates the pseudouridine at position 1915 (m3Psi1915) in 23S rRNA. In Desulfitobacterium hafniense (strain Y51), this protein is Ribosomal RNA large subunit methyltransferase H.